The following is a 450-amino-acid chain: Chromosomal replication initiator protein DnaA (450 aa).

The segment at 1-84 (MENIHDLWDR…AVKFIIPPNQ (84 aa)) is domain I, interacts with DnaA modulators. Positions 84-111 (QADEKLELPSSAKKQRKPYEEANDFPQS) are domain II. Residues 112-328 (MLNPKYTFDT…GALIRVVAYS (217 aa)) form a domain III, AAA+ region region. Residues Gly156, Gly158, Lys159, and Thr160 each coordinate ATP. A domain IV, binds dsDNA region spans residues 329 to 450 (SLINKEITAD…KEIQEKLKQL (122 aa)).

The protein belongs to the DnaA family. As to quaternary structure, oligomerizes as a right-handed, spiral filament on DNA at oriC.

The protein localises to the cytoplasm. In terms of biological role, plays an essential role in the initiation and regulation of chromosomal replication. ATP-DnaA binds to the origin of replication (oriC) to initiate formation of the DNA replication initiation complex once per cell cycle. Binds the DnaA box (a 9 base pair repeat at the origin) and separates the double-stranded (ds)DNA. Forms a right-handed helical filament on oriC DNA; dsDNA binds to the exterior of the filament while single-stranded (ss)DNA is stabiized in the filament's interior. The ATP-DnaA-oriC complex binds and stabilizes one strand of the AT-rich DNA unwinding element (DUE), permitting loading of DNA polymerase. After initiation quickly degrades to an ADP-DnaA complex that is not apt for DNA replication. Binds acidic phospholipids. This Geobacillus thermodenitrificans (strain NG80-2) protein is Chromosomal replication initiator protein DnaA.